A 309-amino-acid polypeptide reads, in one-letter code: tRNA dimethylallyltransferase (309 aa).

9-16 (GPTAVGKT) is an ATP binding site. 11 to 16 (TAVGKT) provides a ligand contact to substrate. The segment at 34-37 (DSMQ) is interaction with substrate tRNA.

The protein belongs to the IPP transferase family. As to quaternary structure, monomer. It depends on Mg(2+) as a cofactor.

The enzyme catalyses adenosine(37) in tRNA + dimethylallyl diphosphate = N(6)-dimethylallyladenosine(37) in tRNA + diphosphate. Its function is as follows. Catalyzes the transfer of a dimethylallyl group onto the adenine at position 37 in tRNAs that read codons beginning with uridine, leading to the formation of N6-(dimethylallyl)adenosine (i(6)A). This chain is tRNA dimethylallyltransferase, found in Clostridium kluyveri (strain NBRC 12016).